Reading from the N-terminus, the 316-residue chain is tRNA dimethylallyltransferase (316 aa).

17–24 (GPTASGKT) contacts ATP. Position 19-24 (19-24 (TASGKT)) interacts with substrate. Interaction with substrate tRNA stretches follow at residues 42–45 (DSAL), 166–170 (QRLSR), and 247–252 (RCVGYR).

This sequence belongs to the IPP transferase family. As to quaternary structure, monomer. Mg(2+) is required as a cofactor.

It carries out the reaction adenosine(37) in tRNA + dimethylallyl diphosphate = N(6)-dimethylallyladenosine(37) in tRNA + diphosphate. In terms of biological role, catalyzes the transfer of a dimethylallyl group onto the adenine at position 37 in tRNAs that read codons beginning with uridine, leading to the formation of N6-(dimethylallyl)adenosine (i(6)A). The polypeptide is tRNA dimethylallyltransferase (Salmonella newport (strain SL254)).